The following is a 249-amino-acid chain: Early E1A protein (249 aa).

Residues 38–46 (MSLHDLFDV) form an interaction with RB1 in competition with E2F1 region. An interaction with UBE2I region spans residues 74–131 (SAAESGSGDSGVGEELLPVDLDLKCYEDGLPPSDPETDEATEAEEEAAMPTYVNENEN). Residues 96–100 (LKCYE) carry the LXCXE motif, interaction with host RB1 and TMEM173/STING motif. A zinc finger lies at 145 to 165 (CRACDFHRGTSGNPEAMCALC). The tract at residues 180–203 (DAEGESESGSPEDTDFPHPLTATP) is disordered. Residues 181–193 (AEGESESGSPEDT) are compositionally biased toward acidic residues. A PXDLS motif, CTBP-binding motif is present at residues 238-242 (PLNLS). The short motif at 244–248 (KRPKC) is the Nuclear localization signal element.

It belongs to the adenoviridae E1A protein family. Interacts with host UBE2I; this interaction interferes with polySUMOylation. Interacts with host RB1; this interaction induces the aberrant dissociation of RB1-E2F1 complex thereby disrupting the activity of RB1 and activating E2F1-regulated genes. Interacts with host ATF7; the interaction enhances ATF7-mediated viral transactivation activity which requires the zinc binding domains of both proteins. Isoform early E1A 32 kDa protein and isoform early E1A 26 kDa protein interact (via N-terminus) with CUL1 and E3 ubiquitin ligase RBX1; these interactions inhibit RBX1-CUL1-dependent elongation reaction of ubiquitin chains and attenuate ubiquitination of SCF(FBXW7) target proteins. Interacts (via PXLXP motif) with host ZMYND11/BS69 (via MYND-type zinc finger); this interaction inhibits E1A mediated transactivation. Interacts with host EP300; this interaction stimulates the acetylation of RB1 by recruiting EP300 and RB1 into a multimeric-protein complex. Interacts with host CTBP1 and CTBP2; this interaction seems to potentiate viral replication. Interacts with host DCAF7. Interacts with host DYRK1A. Interacts with host KPNA4; this interaction allows E1A import into the host nucleus. Interacts with host EP400; this interaction stabilizes MYC. Interacts with host TBP protein; this interaction probably disrupts the TBP-TATA complex. Interacts (via LXCXE motif) with host TMEM173/STING; this interaction impairs the ability of TMEM173/STING to sense cytosolic DNA and promote the production of type I interferon (IFN-alpha and IFN-beta). Interacts (via C-terminus) with host ZBED1/hDREF (via C-terminus); the interaction is direct.

It localises to the host nucleus. Functionally, plays a role in viral genome replication by driving entry of quiescent cells into the cell cycle. Stimulation of progression from G1 to S phase allows the virus to efficiently use the cellular DNA replicating machinery to achieve viral genome replication. E1A protein has both transforming and trans-activating activities. Induces the disassembly of the E2F1 transcription factor from RB1 by direct competition for the same binding site on RB1, with subsequent transcriptional activation of E2F1-regulated S-phase genes and of the E2 region of the adenoviral genome. Release of E2F1 leads to the ARF-mediated inhibition of MDM2 and causes TP53/p53 to accumulate because it is not targeted for degradation by MDM2-mediated ubiquitination anymore. This increase in TP53, in turn, would arrest the cell proliferation and direct its death but this effect is counteracted by the viral protein E1B-55K. Inactivation of the ability of RB1 to arrest the cell cycle is critical for cellular transformation, uncontrolled cellular growth and proliferation induced by viral infection. Interaction with RBX1 and CUL1 inhibits ubiquitination of the proteins targeted by SCF(FBXW7) ubiquitin ligase complex, and may be linked to unregulated host cell proliferation. The tumorigenesis-restraining activity of E1A may be related to the disruption of the host CtBP-CtIP complex through the CtBP binding motif. Interaction with host TMEM173/STING impairs the ability of TMEM173/STING to sense cytosolic DNA and promote the production of type I interferon (IFN-alpha and IFN-beta). Promotes the sumoylation of host ZBED1/hDREF with SUMO1. The protein is Early E1A protein of Homo sapiens (Human).